A 323-amino-acid chain; its full sequence is MAAELSMGPELPTSPLAMEYVNDFDLLKFDVKKEPLGRAERPGRPCTRLQPAGSLSSTPLSTPCSSVPSSPSFSPTEQKTHLEDLYWMASNYQQMNPEALNLTPEDAVEALIGSHPVPQPLQSFDSFRGAHHHHHHHHPHPHHAYPGAGVAHDELGPHAHPHHHHHHQASPPPSSAASPAQQLPTSHPGPGPHATASATAAGGNGSVEDRFSDDQLVSMSVRELNRHLRGFTKDEVIRLKQKRRTLKNRGYAQSCRYKRVQQKHHLENEKTQLIQQVEQLKQEVSRLARERDAHKVKCEKLANSGFREAGSTSDSPSSPEFFL.

Lys-32 participates in a covalent cross-link: Glycyl lysine isopeptide (Lys-Gly) (interchain with G-Cter in SUMO). Over residues 34–43 the composition is skewed to basic and acidic residues; the sequence is EPLGRAERPG. 2 disordered regions span residues 34–78 and 116–210; these read EPLG…PTEQ and PVPQ…VEDR. The span at 54–76 shows a compositional bias: low complexity; sequence SLSSTPLSTPCSSVPSSPSFSPT. Basic residues-rich tracts occupy residues 129–143 and 159–168; these read GAHH…HPHH and AHPHHHHHHQ. The segment covering 192 to 201 has biased composition (low complexity); it reads PHATASATAA. Residues 238 to 263 are basic motif; it reads RLKQKRRTLKNRGYAQSCRYKRVQQK. One can recognise a bZIP domain in the interval 238-301; that stretch reads RLKQKRRTLK…DAHKVKCEKL (64 aa). Residues 266-287 form a leucine-zipper region; sequence LENEKTQLIQQVEQLKQEVSRL. Lys-297 participates in a covalent cross-link: Glycyl lysine isopeptide (Lys-Gly) (interchain with G-Cter in SUMO).

It belongs to the bZIP family. Maf subfamily. Homodimer or heterodimer with other bHLH-Zip transcription factors. Binds DNA as a homodimer or a heterodimer. Forms homodimers and heterodimers with FOS, FOSB and FOSL2, but not with JUN proteins (JUN, JUNB and JUND). Interacts with PAX6; the interaction is direct. Interacts with ETS1 and LRP1. Interacts with the intracellular cytoplasmic domain of LRP1 (LRPICD); the interaction results in a moderate reduction of MAFB transcriptional potential. Sumoylated. Sumoylation on Lys-32 and Lys-297 stimulates its transcriptional repression activity and promotes macrophage differentiation from myeloid progenitors.

It localises to the nucleus. Acts as a transcriptional activator or repressor. Plays a pivotal role in regulating lineage-specific hematopoiesis by repressing ETS1-mediated transcription of erythroid-specific genes in myeloid cells. Required for monocytic, macrophage, osteoclast, podocyte and islet beta cell differentiation. Involved in renal tubule survival and F4/80 maturation. Activates the insulin and glucagon promoters. Together with PAX6, transactivates weakly the glucagon gene promoter through the G1 element. SUMO modification controls its transcriptional activity and ability to specify macrophage fate. Binds element G1 on the glucagon promoter. Involved either as an oncogene or as a tumor suppressor, depending on the cell context. Required for the transcriptional activation of HOXB3 in the rhombomere r5 in the hindbrain. This Macaca fascicularis (Crab-eating macaque) protein is Transcription factor MafB (MAFB).